We begin with the raw amino-acid sequence, 234 residues long: Response regulator RppA (234 aa).

Residues 2 to 118 (RILLVEDETD…ELLARLRALQ (117 aa)) enclose the Response regulatory domain. Asp-53 is modified (4-aspartylphosphate). The segment at residues 126–232 (PQILTLGNFS…VPGQGYRFTL (107 aa)) is a DNA-binding region (ompR/PhoB-type).

Interacts with histidine kinase Hik2; may accept phosphate from Hik2.

Its function is as follows. Member of two-component regulatory system RppA/RppB, involved in the establishment of the appropriate stoichiometry between the 2 photosystems. It senses changes in the plastoquinone (PQ) redox poise. Another group shows this two-component pair, renamed NrsR/NrsS, controls the nickel-dependent expression of the nrsBACD operon; they suggest the photosystem-related activities seen earlier are due to the expression of NrsS (RppB) in the absence of its natural substrate NrsR (RppA). May accept phosphate from Hik2 in a possible Hik2/RppA two-component system. In Synechocystis sp. (strain ATCC 27184 / PCC 6803 / Kazusa), this protein is Response regulator RppA.